The chain runs to 447 residues: Tubulin alpha-2 chain (447 aa).

Residues Gln11, Glu71, Gly144, Thr145, Thr179, Asn206, and Asn228 each coordinate GTP. Position 71 (Glu71) interacts with Mg(2+). Glu254 is a catalytic residue.

It belongs to the tubulin family. In terms of assembly, dimer of alpha and beta chains. A typical microtubule is a hollow water-filled tube with an outer diameter of 25 nm and an inner diameter of 15 nM. Alpha-beta heterodimers associate head-to-tail to form protofilaments running lengthwise along the microtubule wall with the beta-tubulin subunit facing the microtubule plus end conferring a structural polarity. Microtubules usually have 13 protofilaments but different protofilament numbers can be found in some organisms and specialized cells. It depends on Mg(2+) as a cofactor. Undergoes a tyrosination/detyrosination cycle, the cyclic removal and re-addition of a C-terminal tyrosine residue by the enzymes tubulin tyrosine carboxypeptidase (TTCP) and tubulin tyrosine ligase (TTL), respectively.

It localises to the cytoplasm. Its subcellular location is the cytoskeleton. It carries out the reaction GTP + H2O = GDP + phosphate + H(+). In terms of biological role, tubulin is the major constituent of microtubules, a cylinder consisting of laterally associated linear protofilaments composed of alpha- and beta-tubulin heterodimers. Microtubules grow by the addition of GTP-tubulin dimers to the microtubule end, where a stabilizing cap forms. Below the cap, tubulin dimers are in GDP-bound state, owing to GTPase activity of alpha-tubulin. This is Tubulin alpha-2 chain (TUBA2) from Eleusine indica (Goosegrass).